Here is a 329-residue protein sequence, read N- to C-terminus: MTWRDEIARRVRGEHLRDAPLAPRTAVRVGGPADLLCRPADGDALSALLRAVRELGVPLSVLGGGANTLVADAGVRGVVLRLPQEFPGESTDGGTLVLSAGAPISRLPARAHAHGLVGMEFLGGIPGTLGGAAAMNAGTRLGEMKDVVTRLELATPDGTGFVPASALGYAYRTCRLPPGAVIARVEVRLHAGDVAASEALMREDRERRRATQPLDRPTFGSTFTNPPGEYAGRLVEAVGLKGHRVGNAIWSPVHANFVTNLGGATARDVLALVRLARARVKERFGIALETEVRLMGEFLDEDLEGLDGHAAAGGGPGAASGGVRPPEAT.

An FAD-binding PCMH-type domain is found at Arg28–Gly192. Residue Arg172 is part of the active site. The segment at Arg202–Pro227 is disordered. Ser221 functions as the Proton donor in the catalytic mechanism. Glu291 is an active-site residue. The tract at residues Asp307–Thr329 is disordered. Residues Ala311–Ser320 are compositionally biased toward gly residues.

This sequence belongs to the MurB family. FAD is required as a cofactor.

The protein resides in the cytoplasm. It catalyses the reaction UDP-N-acetyl-alpha-D-muramate + NADP(+) = UDP-N-acetyl-3-O-(1-carboxyvinyl)-alpha-D-glucosamine + NADPH + H(+). It participates in cell wall biogenesis; peptidoglycan biosynthesis. Its function is as follows. Cell wall formation. The sequence is that of UDP-N-acetylenolpyruvoylglucosamine reductase from Anaeromyxobacter sp. (strain K).